The primary structure comprises 64 residues: Disintegrin VB7B (64 aa).

Positions 1–64 (ELLQNSGNPC…TGISSDCPRN (64 aa)) constitute a Disintegrin domain. Intrachain disulfides connect Cys10–Cys33, Cys24–Cys30, Cys29–Cys54, and Cys42–Cys61. The short motif at 46–48 (KGD) is the Cell attachment site; atypical (KGD) element.

This sequence belongs to the venom metalloproteinase (M12B) family. P-II subfamily. P-IIe sub-subfamily. Heterodimer with VB7A; disulfide-linked. Expressed by the venom gland.

The protein resides in the secreted. In terms of biological role, poor inhibitor of platelet aggregation. The disintegrin inhibits the adhesion of cells expressing the RGD-dependent integrin alpha-5/beta-1 (ITGA5/ITGB1) to immobilized fibronectin. Inhibition on alpha-IIb/beta-3 (ITGA2B/ITGB3) is low. The polypeptide is Disintegrin VB7B (Vipera berus berus (Common viper)).